Reading from the N-terminus, the 219-residue chain is Small ribosomal subunit protein uS3c (219 aa).

Positions 47-119 (VRKYVRTAEN…KFIISLAEVE (73 aa)) constitute a KH type-2 domain.

Belongs to the universal ribosomal protein uS3 family. Part of the 30S ribosomal subunit.

The protein localises to the plastid. It is found in the chloroplast. This is Small ribosomal subunit protein uS3c (rps3) from Staurastrum punctulatum (Green alga).